A 169-amino-acid polypeptide reads, in one-letter code: ATP synthase subunit b (169 aa).

A helical membrane pass occupies residues 13-33; it reads LFLFQLINFLIIVFILKKFLF.

It belongs to the ATPase B chain family. In terms of assembly, F-type ATPases have 2 components, F(1) - the catalytic core - and F(0) - the membrane proton channel. F(1) has five subunits: alpha(3), beta(3), gamma(1), delta(1), epsilon(1). F(0) has three main subunits: a(1), b(2) and c(10-14). The alpha and beta chains form an alternating ring which encloses part of the gamma chain. F(1) is attached to F(0) by a central stalk formed by the gamma and epsilon chains, while a peripheral stalk is formed by the delta and b chains.

It is found in the cell inner membrane. In terms of biological role, f(1)F(0) ATP synthase produces ATP from ADP in the presence of a proton or sodium gradient. F-type ATPases consist of two structural domains, F(1) containing the extramembraneous catalytic core and F(0) containing the membrane proton channel, linked together by a central stalk and a peripheral stalk. During catalysis, ATP synthesis in the catalytic domain of F(1) is coupled via a rotary mechanism of the central stalk subunits to proton translocation. Its function is as follows. Component of the F(0) channel, it forms part of the peripheral stalk, linking F(1) to F(0). The chain is ATP synthase subunit b from Endomicrobium trichonymphae.